The chain runs to 908 residues: Hyphal wall protein 2 (908 aa).

The signal sequence occupies residues Met-1–Ala-20. Low complexity-rich tracts occupy residues Pro-110–Lys-187, Glu-266–His-324, and His-332–Thr-405. Disordered regions lie at residues Pro-110–Thr-221 and Thr-263–Tyr-477. Over residues Pro-406 to Ile-416 the composition is skewed to polar residues. Positions Thr-422–Tyr-477 are enriched in low complexity. N-linked (GlcNAc...) asparagine glycans are attached at residues Asn-449, Asn-462, and Asn-519. Residues Gly-539–Pro-608 show a composition bias toward low complexity. The interval Gly-539 to Ser-700 is disordered. A compositionally biased stretch (polar residues) spans Thr-624 to Gln-638. Residue Asn-634 is glycosylated (N-linked (GlcNAc...) asparagine). 2 stretches are compositionally biased toward low complexity: residues Ser-639–Val-655 and Ser-662–Thr-677. The N-linked (GlcNAc...) asparagine glycan is linked to Asn-684. Over residues Thr-685–Ser-700 the composition is skewed to low complexity. Asn-764 is a glycosylation site (N-linked (GlcNAc...) asparagine). A disordered region spans residues Val-821 to Lys-844. A lipid anchor (GPI-anchor amidated glycine) is attached at Gly-887. Positions Thr-888–Ile-908 are cleaved as a propeptide — removed in mature form.

The GPI-anchor is attached to the protein in the endoplasmic reticulum and serves to target the protein to the cell surface. There, the glucosamine-inositol phospholipid moiety is cleaved off and the GPI-modified mannoprotein is covalently attached via its lipidless GPI glycan remnant to the 1,6-beta-glucan of the outer cell wall layer.

Its subcellular location is the secreted. It localises to the cell wall. The protein localises to the membrane. GPI-anchored cell wall protein required for mating efficiency, biofilm formation, adhesion, filamentous growth, and oxidative stress tolerance. Involved in normal disseminated infection in a mouse systemic candidiasis model. This is Hyphal wall protein 2 (HWP2) from Candida albicans (strain SC5314 / ATCC MYA-2876) (Yeast).